Reading from the N-terminus, the 426-residue chain is D-tagatose-1,6-bisphosphate aldolase subunit KbaZ (426 aa).

Belongs to the GatZ/KbaZ family. KbaZ subfamily. In terms of assembly, forms a complex with KbaY.

It participates in carbohydrate metabolism; D-tagatose 6-phosphate degradation; D-glyceraldehyde 3-phosphate and glycerone phosphate from D-tagatose 6-phosphate: step 2/2. Functionally, component of the tagatose-1,6-bisphosphate aldolase KbaYZ that is required for full activity and stability of the Y subunit. Could have a chaperone-like function for the proper and stable folding of KbaY. When expressed alone, KbaZ does not show any aldolase activity. The polypeptide is D-tagatose-1,6-bisphosphate aldolase subunit KbaZ (Shigella flexneri).